Consider the following 399-residue polypeptide: Long-chain primary alcohol dehydrogenase AdhA (399 aa).

The protein belongs to the iron-containing alcohol dehydrogenase family. As to quaternary structure, homotetramer. It depends on Zn(2+) as a cofactor.

It carries out the reaction a primary alcohol + NADP(+) = an aldehyde + NADPH + H(+). Alcohol dehydrogenase active against primary long-chain alcohols. Pentan-1-ol is the optimum substrate in vitro, but also shows efficient dehydrogenase activity on propanol, hexanol, and ethanol. The sequence is that of Long-chain primary alcohol dehydrogenase AdhA (adhA) from Thermoanaerobacter ethanolicus (Clostridium thermohydrosulfuricum).